A 667-amino-acid chain; its full sequence is Fermitin family homolog 3 (667 aa).

Ser-8 carries the post-translational modification Phosphoserine. The residue at position 11 (Tyr-11) is a Phosphotyrosine. The FERM domain maps to 229–558 (WLDSSRCLMQ…SLPDFGISYV (330 aa)). In terms of domain architecture, PH spans 354–457 (DHLRIFRIPR…WMAGCRLASK (104 aa)). Tyr-504 is modified (phosphotyrosine). Thr-591 carries the post-translational modification Phosphothreonine.

The protein belongs to the kindlin family. Interacts with ITGB1, ITGB2 and ITGB3 (via cytoplasmic tails). In terms of tissue distribution, highly expressed in lymph node. Expressed in thymus, spleen and leukocytes. Weakly expressed in placenta, small intestine, stomach, testis and lung. Overexpressed in B-cell malignancies.

Its subcellular location is the cell projection. It is found in the podosome. In terms of biological role, plays a central role in cell adhesion in hematopoietic cells. Acts by activating the integrin beta-1-3 (ITGB1, ITGB2 and ITGB3). Required for integrin-mediated platelet adhesion and leukocyte adhesion to endothelial cells. Required for activation of integrin beta-2 (ITGB2) in polymorphonuclear granulocytes (PMNs). Its function is as follows. Isoform 2 may act as a repressor of NF-kappa-B and apoptosis. The chain is Fermitin family homolog 3 (FERMT3) from Homo sapiens (Human).